Reading from the N-terminus, the 277-residue chain is Putative phosphoenolpyruvate synthase regulatory protein (277 aa).

Residue 156–163 coordinates ADP; the sequence is GVSRAGKT.

The protein belongs to the pyruvate, phosphate/water dikinase regulatory protein family. PSRP subfamily.

The catalysed reaction is [pyruvate, water dikinase] + ADP = [pyruvate, water dikinase]-phosphate + AMP + H(+). It carries out the reaction [pyruvate, water dikinase]-phosphate + phosphate + H(+) = [pyruvate, water dikinase] + diphosphate. In terms of biological role, bifunctional serine/threonine kinase and phosphorylase involved in the regulation of the phosphoenolpyruvate synthase (PEPS) by catalyzing its phosphorylation/dephosphorylation. This is Putative phosphoenolpyruvate synthase regulatory protein from Deinococcus radiodurans (strain ATCC 13939 / DSM 20539 / JCM 16871 / CCUG 27074 / LMG 4051 / NBRC 15346 / NCIMB 9279 / VKM B-1422 / R1).